A 584-amino-acid polypeptide reads, in one-letter code: Glutathione hydrolase proenzyme (584 aa).

The signal sequence occupies residues 1 to 25; it reads MAPAAMNLLCTVLYLLSSFAQVSDA. N-linked (GlcNAc...) asparagine glycosylation is present at N111. An L-glutamate-binding site is contributed by R120. N135, N262, N272, N350, and N370 each carry an N-linked (GlcNAc...) asparagine glycan. Catalysis depends on T395, which acts as the Nucleophile. L-glutamate is bound by residues T413, E434, and 465 to 466; that span reads SS. N547 is a glycosylation site (N-linked (GlcNAc...) asparagine).

It belongs to the gamma-glutamyltransferase family. In terms of assembly, heterodimer composed of the light and heavy chains. The active site is located in the light chain. Cleaved by autocatalysis into a large and a small subunit and the autocatalytic cleavage is essential to the functional activation of the enzyme.

The protein localises to the secreted. It catalyses the reaction an N-terminal (5-L-glutamyl)-[peptide] + an alpha-amino acid = 5-L-glutamyl amino acid + an N-terminal L-alpha-aminoacyl-[peptide]. The enzyme catalyses glutathione + H2O = L-cysteinylglycine + L-glutamate. The catalysed reaction is an S-substituted glutathione + H2O = an S-substituted L-cysteinylglycine + L-glutamate. It carries out the reaction leukotriene C4 + H2O = leukotriene D4 + L-glutamate. Its pathway is sulfur metabolism; glutathione metabolism. Cleaves the gamma-glutamyl bond of extracellular glutathione (gamma-Glu-Cys-Gly), glutathione conjugates, and other gamma-glutamyl compounds. The metabolism of glutathione releases free glutamate and the dipeptide cysteinyl-glycine, which is hydrolyzed to cysteine and glycine by dipeptidases. In the presence of high concentrations of dipeptides and some amino acids, can also catalyze a transpeptidation reaction, transferring the gamma-glutamyl moiety to an acceptor amino acid to form a new gamma-glutamyl compound. Initiates extracellular glutathione (GSH) breakdown, provides cells with a local cysteine supply and contributes to maintain intracellular GSH level. It is part of the cell antioxidant defense mechanism. The polypeptide is Glutathione hydrolase proenzyme (Arthroderma benhamiae (strain ATCC MYA-4681 / CBS 112371) (Trichophyton mentagrophytes)).